A 365-amino-acid chain; its full sequence is P2Y purinoceptor 4 (365 aa).

Residues 1 to 34 (MASTESSLLRSLGLSPGPGSSEVELDCWFDEDFK) are Extracellular-facing. A helical membrane pass occupies residues 35–61 (FILLPVSYAVVFVLGLGLNAPTLWLFI). The Cytoplasmic segment spans residues 62 to 72 (FRLRPWDATAT). Residues 73–95 (YMFHLALSDTLYVLSLPTLIYYY) traverse the membrane as a helical segment. Topologically, residues 96–112 (AAHNHWPFGTEICKFVR) are extracellular. An intrachain disulfide couples Cys108 to Cys185. A helical membrane pass occupies residues 113–131 (FLFYWNLYCSVLFLTCISV). Topologically, residues 132–154 (HRYLGICHPLRALRWGRPRLAGL) are cytoplasmic. The helical transmembrane segment at 155–174 (LCLAVWLVVAGCLVPNLFFV) threads the bilayer. At 175 to 196 (TTSNKGTTVLCHDTTRPEEFDH) the chain is on the extracellular side. The helical transmembrane segment at 197 to 222 (YVHFSSAVMGLLFGVPCLVTLVCYGL) threads the bilayer. The Cytoplasmic segment spans residues 223–246 (MARRLYQPLPGSAQSSSRLRSLRT). A helical transmembrane segment spans residues 247-269 (IAVVLTVFAVCFVPFHITRTIYY). Topologically, residues 270–287 (LARLLEADCRVLNIVNVV) are extracellular. A helical transmembrane segment spans residues 288–309 (YKVTRPLASANSCLDPVLYLLT). Residues 310–365 (GDKYRRQLRQLCGGGKPQPRTAASSLALVSLPEDSSCRWAATPQDSSCSTPRADRL) are Cytoplasmic-facing. A phosphoserine mark is found at Ser333 and Ser334.

Belongs to the G-protein coupled receptor 1 family. Post-translationally, phosphorylation of Ser-333 and Ser-334 is a key step in agonist-dependent desensitization and loss of surface P2RY4. This phosphorylation does not involve PKC, nor other calcium activated kinases. In terms of tissue distribution, pancreas.

It localises to the cell membrane. In terms of biological role, receptor for UTP and UDP coupled to G-proteins that activate a phosphatidylinositol-calcium second messenger system. Not activated by ATP or ADP. In Homo sapiens (Human), this protein is P2Y purinoceptor 4 (P2RY4).